Consider the following 1018-residue polypeptide: Pikachurin (1018 aa).

The first 23 residues, 1-23, serve as a signal peptide directing secretion; sequence MDLIRGVLLRLLLLASSLGPGAA. 2 Fibronectin type-III domains span residues 37–145 and 153–248; these read PPLD…TLPQ and APQQ…TARP. Asn47 carries N-linked (GlcNAc...) asparagine glycosylation. The tract at residues 228–274 is disordered; the sequence is VNPHGSSPRSQPSSTIRTARPEESGSGRYGPHYATDTEAGEDDDTFE. Positions 231–244 are enriched in polar residues; the sequence is HGSSPRSQPSSTIR. Residues 265 to 274 show a composition bias toward acidic residues; that stretch reads EAGEDDDTFE. In terms of domain architecture, EGF-like 1 spans 352–390; sequence FDTSCDETVCSADSFCVSDYTWGGSRCHCNLGKGGESCS. Disulfide bonds link Cys356-Cys367, Cys361-Cys378, Cys380-Cys389, Cys543-Cys573, Cys578-Cys589, Cys583-Cys599, Cys601-Cys610, Cys797-Cys808, Cys802-Cys817, Cys819-Cys828, and Cys988-Cys1015. Positions 395–573 constitute a Laminin G-like 1 domain; the sequence is IQYPQFFGHS…ALSGADVGEC (179 aa). EGF-like domains are found at residues 574 to 611 and 793 to 829; these read SSGICDEASCINGGTCMASKADSYICLCPLGFRGRHCE and AAHPCVGSPCAHGGSCRPRKEGYECDCPLGFEGLHCQ. The Laminin G-like 2 domain maps to 618–797; sequence IPQFKESLRS…VNVENAAHPC (180 aa). In terms of domain architecture, Laminin G-like 3 spans 836 to 1015; the sequence is IEIPQFIGRS…AVDGKNINTC (180 aa).

As to quaternary structure, interacts with DAG1 alpha-dystroglycan. Interacts with GPR158 and GPR179; transsynaptic interaction is required for synaptic organization of photoreceptor cells. Post-translationally, O-glycosylated; contains chondroitin sulfate and heparan sulfate.

It is found in the secreted. It localises to the extracellular space. The protein resides in the extracellular matrix. Its subcellular location is the synaptic cleft. The protein localises to the presynaptic active zone. Its function is as follows. Involved in both the retinal photoreceptor ribbon synapse formation and physiological functions of visual perception. Plays a key role in the synaptic organization of photoreceptors by mediating transsynaptic interaction between alpha-dystroglycan and GPR179 on the postsynaptic membrane. Necessary for proper bipolar dendritic tip apposition to the photoreceptor ribbon synapse. Promotes matrix assembly and cell adhesiveness. This is Pikachurin (EGFLAM) from Bos taurus (Bovine).